We begin with the raw amino-acid sequence, 236 residues long: Phosphoribosylaminoimidazole-succinocarboxamide synthase (236 aa).

This sequence belongs to the SAICAR synthetase family.

The catalysed reaction is 5-amino-1-(5-phospho-D-ribosyl)imidazole-4-carboxylate + L-aspartate + ATP = (2S)-2-[5-amino-1-(5-phospho-beta-D-ribosyl)imidazole-4-carboxamido]succinate + ADP + phosphate + 2 H(+). The protein operates within purine metabolism; IMP biosynthesis via de novo pathway; 5-amino-1-(5-phospho-D-ribosyl)imidazole-4-carboxamide from 5-amino-1-(5-phospho-D-ribosyl)imidazole-4-carboxylate: step 1/2. This Streptococcus equi subsp. zooepidemicus (strain H70) protein is Phosphoribosylaminoimidazole-succinocarboxamide synthase.